Here is a 273-residue protein sequence, read N- to C-terminus: Dermonecrotic toxin LhSicTox-alphaIA2biii (273 aa).

H5 is an active-site residue. The Mg(2+) site is built by E25 and D27. The active-site Nucleophile is the H41. Disulfide bonds link C45/C51 and C47/C190. Residue D85 participates in Mg(2+) binding.

This sequence belongs to the arthropod phospholipase D family. Class II subfamily. Mg(2+) serves as cofactor. In terms of tissue distribution, expressed by the venom gland.

It is found in the secreted. It carries out the reaction an N-(acyl)-sphingosylphosphocholine = an N-(acyl)-sphingosyl-1,3-cyclic phosphate + choline. The catalysed reaction is an N-(acyl)-sphingosylphosphoethanolamine = an N-(acyl)-sphingosyl-1,3-cyclic phosphate + ethanolamine. The enzyme catalyses a 1-acyl-sn-glycero-3-phosphocholine = a 1-acyl-sn-glycero-2,3-cyclic phosphate + choline. It catalyses the reaction a 1-acyl-sn-glycero-3-phosphoethanolamine = a 1-acyl-sn-glycero-2,3-cyclic phosphate + ethanolamine. Its function is as follows. Dermonecrotic toxins cleave the phosphodiester linkage between the phosphate and headgroup of certain phospholipids (sphingolipid and lysolipid substrates), forming an alcohol (often choline) and a cyclic phosphate. This toxin acts on sphingomyelin (SM). It may also act on ceramide phosphoethanolamine (CPE), lysophosphatidylcholine (LPC) and lysophosphatidylethanolamine (LPE), but not on lysophosphatidylserine (LPS), and lysophosphatidylglycerol (LPG). It acts by transphosphatidylation, releasing exclusively cyclic phosphate products as second products. Induces dermonecrosis, hemolysis, increased vascular permeability, edema, inflammatory response, and platelet aggregation. This Loxosceles hirsuta (Recluse spider) protein is Dermonecrotic toxin LhSicTox-alphaIA2biii.